We begin with the raw amino-acid sequence, 501 residues long: Tetrachloroethene reductive dehalogenase (501 aa).

Positions methionine 1–alanine 37 form a signal peptide, tat-type signal. Residues alanine 74, tyrosine 207, asparagine 309 to serine 314, methionine 329 to cysteine 332, and valine 341 to leucine 343 each bind corrinoid. Positions lysine 356–arginine 386 constitute a 4Fe-4S ferredoxin-type 1 domain. [4Fe-4S] cluster is bound by residues cysteine 366, cysteine 369, cysteine 372, and cysteine 376. Residue histidine 394–glutamine 401 participates in corrinoid binding. Cysteine 409 serves as a coordination point for [4Fe-4S] cluster. Tyrosine 419 contacts corrinoid. The [4Fe-4S] cluster site is built by cysteine 420, cysteine 423, and cysteine 427. Positions cysteine 420–glycine 439 constitute a 4Fe-4S ferredoxin-type 2 domain.

The protein belongs to the PceA family. Monomer. [4Fe-4S] cluster serves as cofactor. Requires corrinoid as cofactor. In terms of processing, predicted to be exported by the Tat system. The position of the signal peptide cleavage has not been experimentally proven.

The protein resides in the cytoplasm. It localises to the cell inner membrane. The enzyme catalyses trichloroethene + chloride + A + H(+) = tetrachloroethene + AH2. It carries out the reaction trichloroethene + AH2 = (Z)-1,2-dichloroethene + chloride + A + H(+). Both the processed and unprocessed enzymes are catalytically active. PCE-dependent growth and PceA activity are inhibited in the presence of high concentrations of 5,6-dimethylbenzimidazole (DMB), probably due to the formation a DMB-containing nor-B12 cofactor. Dechlorination of PCE is stimulated by ammonium ions. Activity is inhibited by chlorinated methanes. Functionally, catalyzes the reductive dechlorination of tetrachloroethene (PCE) to trichloroethene (TCE) and of trichloroethene to cis-1,2-dichloroethene (DCE). In addition, trans-1,3-dichloropropene, 1,1,3-trichloropropene and 2,3-dichloropropene are reduced to a mixture of mono-chloropropenes, 1,1-dichloropropene, and 2-chloropropene, respectively. Is also able to convert brominated phenols such as 4-bromophenol (4-BP), 2,4-dibromophenol (2,4-DBP) and 2,4,6-tribromophenol (2,4,6-TBP). Utilizes formate or pyruvate as electron donors. Titanium(III) citrate could also serve as electron donor. Reduced methyl viologen can act as the artificial electron donor. The protein is Tetrachloroethene reductive dehalogenase of Sulfurospirillum multivorans (Dehalospirillum multivorans).